The sequence spans 102 residues: Large ribosomal subunit protein bL36m (102 aa).

Belongs to the bacterial ribosomal protein bL36 family. In terms of assembly, component of the mitochondrial ribosome large subunit (39S) which comprises a 16S rRNA and about 50 distinct proteins.

It is found in the mitochondrion. The protein is Large ribosomal subunit protein bL36m (Mrpl36) of Mus musculus (Mouse).